The chain runs to 372 residues: MSSTELRRTALDATHRALGATMTDFAGWDMPLRYGSEREEHVAVRTRAGLFDLSHMGEITVTGPQAAELLNFALVGNIGTVKPGRARYTMICREDGGILDDLIVYRLEEAEYMVVANASNAQVVLDALTERAAGFDAEVRDDRDAYALLAVQGPESPGILASLTDADLDGLKYYAGLPGTVAGVPALIARTGYTGEDGFELFVKPEHAVGLWQALTGAGEAAGLIPCGLSCRDTLRLEAGMPLYGNELSTALTPFDAGLGRVVKFEKEGDFVGRAALTEAAERAASRPPRVLVGLVAEGRRVPRSGYRVVAGGEVIGEVTSGAPSPTLGRPIAMAYVDPAHAAPGTEGVGVDIRGSHEPYEVVALPFYKRQK.

Belongs to the GcvT family. The glycine cleavage system is composed of four proteins: P, T, L and H.

It carries out the reaction N(6)-[(R)-S(8)-aminomethyldihydrolipoyl]-L-lysyl-[protein] + (6S)-5,6,7,8-tetrahydrofolate = N(6)-[(R)-dihydrolipoyl]-L-lysyl-[protein] + (6R)-5,10-methylene-5,6,7,8-tetrahydrofolate + NH4(+). Functionally, the glycine cleavage system catalyzes the degradation of glycine. The sequence is that of Aminomethyltransferase from Streptomyces coelicolor (strain ATCC BAA-471 / A3(2) / M145).